The chain runs to 232 residues: Aliphatic sulfonates import ATP-binding protein SsuB 2 (232 aa).

An ABC transporter domain is found at 1–216 (MDIRVDRKAF…PRDRRDPLLA (216 aa)). Position 33–40 (33–40 (GPSGCGKS)) interacts with ATP.

It belongs to the ABC transporter superfamily. Aliphatic sulfonates importer (TC 3.A.1.17.2) family. As to quaternary structure, the complex is composed of two ATP-binding proteins (SsuB), two transmembrane proteins (SsuC) and a solute-binding protein (SsuA).

The protein resides in the cell inner membrane. It catalyses the reaction ATP + H2O + aliphatic sulfonate-[sulfonate-binding protein]Side 1 = ADP + phosphate + aliphatic sulfonateSide 2 + [sulfonate-binding protein]Side 1.. Its function is as follows. Part of the ABC transporter complex SsuABC involved in aliphatic sulfonates import. Responsible for energy coupling to the transport system. The chain is Aliphatic sulfonates import ATP-binding protein SsuB 2 from Pseudomonas syringae pv. tomato (strain ATCC BAA-871 / DC3000).